The following is an 80-amino-acid chain: D-alanyl carrier protein (80 aa).

Positions 1–77 (MDIQKQIVDI…KLVEQVKKLQ (77 aa)) constitute a Carrier domain. Ser35 carries the post-translational modification O-(pantetheine 4'-phosphoryl)serine.

The protein belongs to the DltC family. Post-translationally, 4'-phosphopantetheine is transferred from CoA to a specific serine of apo-DCP.

The protein resides in the cytoplasm. It functions in the pathway cell wall biogenesis; lipoteichoic acid biosynthesis. Its function is as follows. Carrier protein involved in the D-alanylation of lipoteichoic acid (LTA). The loading of thioester-linked D-alanine onto DltC is catalyzed by D-alanine--D-alanyl carrier protein ligase DltA. The DltC-carried D-alanyl group is further transferred to cell membrane phosphatidylglycerol (PG) by forming an ester bond, probably catalyzed by DltD. D-alanylation of LTA plays an important role in modulating the properties of the cell wall in Gram-positive bacteria, influencing the net charge of the cell wall. The sequence is that of D-alanyl carrier protein from Lactobacillus delbrueckii subsp. bulgaricus (strain ATCC 11842 / DSM 20081 / BCRC 10696 / JCM 1002 / NBRC 13953 / NCIMB 11778 / NCTC 12712 / WDCM 00102 / Lb 14).